We begin with the raw amino-acid sequence, 355 residues long: Histidinol-phosphate aminotransferase (355 aa).

K218 bears the N6-(pyridoxal phosphate)lysine mark.

The protein belongs to the class-II pyridoxal-phosphate-dependent aminotransferase family. Histidinol-phosphate aminotransferase subfamily. In terms of assembly, homodimer. Pyridoxal 5'-phosphate serves as cofactor.

It carries out the reaction L-histidinol phosphate + 2-oxoglutarate = 3-(imidazol-4-yl)-2-oxopropyl phosphate + L-glutamate. The protein operates within amino-acid biosynthesis; L-histidine biosynthesis; L-histidine from 5-phospho-alpha-D-ribose 1-diphosphate: step 7/9. This chain is Histidinol-phosphate aminotransferase, found in Pelodictyon phaeoclathratiforme (strain DSM 5477 / BU-1).